The following is a 133-amino-acid chain: uncharacterized protein (133 aa).

This is an uncharacterized protein from Aquifex aeolicus (strain VF5).